The chain runs to 267 residues: Alpha carbonic anhydrase 4 (267 aa).

The first 26 residues, 1–26 (MDTNAKTIFFMAMCFIYLSFPNISHA), serve as a signal peptide directing secretion. Asn-22 carries N-linked (GlcNAc...) asparagine glycosylation. The 231-residue stretch at 34 to 264 (TPFTYEQKTE…SKGRSVWFYD (231 aa)) folds into the Alpha-carbonic anhydrase domain. An intrachain disulfide couples Cys-59 to Cys-214. His-99 (proton acceptor) is an active-site residue. Residues His-125 and His-127 each coordinate Zn(2+). Asn-135 is a glycosylation site (N-linked (GlcNAc...) asparagine). His-144 contacts Zn(2+). Residue 210-211 (TV) participates in substrate binding.

Belongs to the alpha-class carbonic anhydrase family. Zn(2+) serves as cofactor. N-glycosylated.

The protein resides in the plastid. The protein localises to the chloroplast stroma. It carries out the reaction hydrogencarbonate + H(+) = CO2 + H2O. Reversible hydration of carbon dioxide. This is Alpha carbonic anhydrase 4 (ACA4) from Arabidopsis thaliana (Mouse-ear cress).